We begin with the raw amino-acid sequence, 415 residues long: MMLGAVKMEGHEHTDWSTYYGEPECYTSVGNMNTGLGMNSMNTYMSMSGMSTTANMTANSMNMSYVNTGMSPSMTGMSPGTGAMNGMGAGMTAMSTALSPSMSPMTGQPGSMNALTSYTNMNAMSPIYGQSNINRSRDPKTYRRSYTHAKPPYSYISLITMAIQQSPSKMLTLAEIYQWIMDLFPFYRQNQQRWQNSIRHSLSFNDCFLKVPRSPDKPGKGSFWTLHPDSGNMFENGCYLRRQKRFKCEKKMSMKEPGRKGGDGGSANSSSDSCNGNESPHSNSSSGEHKRSLSDMKGSQALSPEHTAPSPVSQGQHLMSQHHSVLAHEAHLKPEHHYSFNHPFSINNLMSSEQQHHKMDLKTYEQVMHYSGYGSPMTGALSMGSMAGKAGLDSASIPDTSYYQGVYSRPIMNSS.

A DNA-binding region (fork-head) is located at residues 150-244 (KPPYSYISLI…ENGCYLRRQK (95 aa)). Residues 251–262 (KMSMKEPGRKGG) show a composition bias toward basic and acidic residues. The tract at residues 251-324 (KMSMKEPGRK…GQHLMSQHHS (74 aa)) is disordered. Positions 266-277 (SANSSSDSCNGN) are enriched in low complexity. The segment covering 310-323 (SPVSQGQHLMSQHH) has biased composition (polar residues).

Its subcellular location is the nucleus. Its function is as follows. Transcription activator for a number of liver genes. Interacts with the cis-acting regulatory regions of these genes. The sequence is that of Hepatocyte nuclear factor 3-beta (foxa2) from Oryzias latipes (Japanese rice fish).